The chain runs to 289 residues: tRNA(Ile)-lysidine synthase (289 aa).

11-16 (SGGPDS) lines the ATP pocket.

The protein belongs to the tRNA(Ile)-lysidine synthase family.

The protein resides in the cytoplasm. The enzyme catalyses cytidine(34) in tRNA(Ile2) + L-lysine + ATP = lysidine(34) in tRNA(Ile2) + AMP + diphosphate + H(+). Functionally, ligates lysine onto the cytidine present at position 34 of the AUA codon-specific tRNA(Ile) that contains the anticodon CAU, in an ATP-dependent manner. Cytidine is converted to lysidine, thus changing the amino acid specificity of the tRNA from methionine to isoleucine. In Mycoplasma pneumoniae (strain ATCC 29342 / M129 / Subtype 1) (Mycoplasmoides pneumoniae), this protein is tRNA(Ile)-lysidine synthase.